The chain runs to 192 residues: Thymidine kinase (192 aa).

ATP-binding positions include 9–16 (GAMNSGKS) and 85–88 (DEVQ). E86 (proton acceptor) is an active-site residue. Zn(2+) is bound by residues C143, C146, C181, and C184.

Belongs to the thymidine kinase family. As to quaternary structure, homotetramer.

The protein localises to the cytoplasm. The catalysed reaction is thymidine + ATP = dTMP + ADP + H(+). The sequence is that of Thymidine kinase from Shouchella clausii (strain KSM-K16) (Alkalihalobacillus clausii).